A 171-amino-acid chain; its full sequence is MPYSLEEQTYFMQEALKEAEKSLQKAEIPIGCVIVKDGEIIGRGHNAREESNQAIMHAEMMAINEANAHEGNWRLLDTTLFVTIEPCVMCSGAIGLARIPHVIYGASNQKFGGVDSLYQILTDERLNHRVQVERGLLAADCANIMQTFFRQGRERKKIAKHLIKEQSDPFD.

The CMP/dCMP-type deaminase domain maps to 6–133 (EEQTYFMQEA…ERLNHRVQVE (128 aa)). His-57 lines the Zn(2+) pocket. Catalysis depends on Glu-59, which acts as the Proton donor. Positions 87 and 90 each coordinate Zn(2+).

The protein belongs to the cytidine and deoxycytidylate deaminase family. As to quaternary structure, homodimer. It depends on Zn(2+) as a cofactor.

It catalyses the reaction adenosine(34) in tRNA + H2O + H(+) = inosine(34) in tRNA + NH4(+). Functionally, catalyzes the deamination of adenosine to inosine at the wobble position 34 of tRNA(Arg2). In Streptococcus pyogenes serotype M1, this protein is tRNA-specific adenosine deaminase.